A 161-amino-acid chain; its full sequence is Nucleotide-binding protein XCV3791 (161 aa).

It belongs to the YajQ family.

Nucleotide-binding protein. The chain is Nucleotide-binding protein XCV3791 from Xanthomonas euvesicatoria pv. vesicatoria (strain 85-10) (Xanthomonas campestris pv. vesicatoria).